The sequence spans 423 residues: Mannitol-1-phosphate 5-dehydrogenase (423 aa).

The Zn(2+) site is built by cysteine 40, histidine 69, and glutamate 70.

This sequence belongs to the zinc-containing alcohol dehydrogenase family. It depends on Zn(2+) as a cofactor.

It carries out the reaction D-mannitol 1-phosphate + NAD(+) = beta-D-fructose 6-phosphate + NADH + H(+). Functionally, seems to be involved in mannitol utilization. Complements an E.coli mtlD deletion mutant. This chain is Mannitol-1-phosphate 5-dehydrogenase, found in Aliivibrio fischeri (strain ATCC 700601 / ES114) (Vibrio fischeri).